A 197-amino-acid chain; its full sequence is Imidazoleglycerol-phosphate dehydratase (197 aa).

This sequence belongs to the imidazoleglycerol-phosphate dehydratase family.

The protein resides in the cytoplasm. The enzyme catalyses D-erythro-1-(imidazol-4-yl)glycerol 3-phosphate = 3-(imidazol-4-yl)-2-oxopropyl phosphate + H2O. The protein operates within amino-acid biosynthesis; L-histidine biosynthesis; L-histidine from 5-phospho-alpha-D-ribose 1-diphosphate: step 6/9. The protein is Imidazoleglycerol-phosphate dehydratase of Saccharophagus degradans (strain 2-40 / ATCC 43961 / DSM 17024).